A 330-amino-acid chain; its full sequence is (11Z)-hexadec-11-enoyl-CoA conjugase (330 aa).

2 helical membrane passes run 37–57 (IVVM…YGLY) and 65–85 (LATS…ITAG). The short motif at 87-92 (HRLWSH) is the Histidine box-1 element. A helical membrane pass occupies residues 101–121 (LEILLMVFNSIAFQNTIFTWV). Residues 124–128 (HRLHH) carry the Histidine box-2 motif. 2 consecutive transmembrane segments (helical) span residues 185–205 (AIPF…MYFW) and 216–238 (TVLR…HLWG). The short motif at 264–268 (HNYHH) is the Histidine box-3 element.

The protein belongs to the fatty acid desaturase type 1 family. The cofactor is Fe(2+). In terms of tissue distribution, highly expressed in the pheromone gland.

It is found in the membrane. The catalysed reaction is an 11,12-saturated fatty acyl-CoA + 2 Fe(II)-[cytochrome b5] + O2 + 2 H(+) = an (11Z)-Delta(11)-fatty acyl-CoA + 2 Fe(III)-[cytochrome b5] + 2 H2O. It catalyses the reaction (11Z)-hexadecenoyl-CoA + AH2 + O2 = (10E,12Z)-hexadecadienoyl-CoA + A + 2 H2O. Fatty acid desaturase that catalyzes 2 consecutive steps in the biosynthesis of bombykol, a sex pheromone produced by the moth. First acts as an acyl-CoA Delta(11) desaturase (1) by catalyzing the formation of Delta(11) fatty acyl precursors. Then acts as a (11Z)-hexadec-11-enoyl-CoA conjugase (2) by converting a single cis double bond at position 11 of (11Z)-hexadec-11-enoyl-CoA into conjugated 10 trans and 12 cis double bonds. The sequence is that of (11Z)-hexadec-11-enoyl-CoA conjugase from Bombyx mori (Silk moth).